Reading from the N-terminus, the 751-residue chain is Adhesive plaque matrix protein (751 aa).

Positions 1–20 (MEGIKLNLCLLCIFTCDILG) are cleaved as a signal peptide. Residues 21 to 41 (FSNGNIYNAHGSAYAGASAGA) are nonrepetitive linker. 55 tandem repeats follow at residues 109–118 (YKPKMTYPPT), 119–128 (YKPKPSYPPT), 129–138 (YKPKPSYPAT), 139–148 (YKSKSSYPSS), 149–158 (YKPKKTYPPT), 159–168 (YKPKLTYPPT), 169–178 (YKPKPSYPPT), 179–188 (YKPKPSYPAT), 189–198 (YKSKSSYPPS), 199–208 (YKTKKTYPSS), 209–218 (YKPKKTYPST), 219–228 (YKPKVSYPPT), 229–238 (YKSKKSYPPI), 239–248 (YKTKASYPSS), 249–258 (YKPKKTYPST), 259–268 (YKPKISYPPT), 269–278 (YKAKPSYPTS), 279–288 (YRAKPSYPST), 289–298 (YKAKPSYPPT), 299–308 (YKAKPSYPPT), 309–318 (YKAKPTYPST), 319–328 (YKAKPSYPPT), 329–338 (YKAKPSYPPT), 339–348 (YKAKPSYPPS), 349–358 (YKPKTTYPPS), 359–368 (YKPKISYPPT), 369–378 (YKAKPSYPPI), 379–388 (YKAKPSYPPT), 389–398 (YKAKPSYLPT), 399–408 (YKAKPSYPPT), 409–418 (YKAKPRYPTT), 419–428 (YKAKPSYPPT), 429–438 (YKAKPSYPPT), 439–448 (YKAKLSYPPT), 449–458 (YKAKPSYPPT), 459–468 (YKAKPSYPPT), 469–478 (YKAKPSYPPT), 479–488 (YKTKPSYPRT), 489–498 (YKAKPSYSST), 499–508 (YKAKPSYPPT), 509–518 (YKAKPSYPPT), 519–528 (YKAKPSYPPT), 529–538 (YKAKPSYPPT), 539–548 (YKAKPSYPPT), 549–558 (YKAKPSYPQT), 559–568 (YKAKSSYPPT), 569–578 (YKAKPSYPPT), 579–588 (YKAKPSYPPT), 589–598 (YKAKPSYPPT), 599–608 (YKAKPSYPPT), 609–618 (YKAKPSYPPT), 619–628 (YKAKPSYPPT), 629–638 (YKAKPSYPPT), 639–648 (YKAKPSYPPT), and 649–658 (YKAKPSYPAT). The 63 X 10 AA tandem repeats of Y-[KR]-[APTS]-K-[KPMSLTIVA]-[STR]-Y-[PLS]-[PASRQT]-[STI] stretch occupies residues 109–732 (YKPKMTYPPT…YKPKPSYPPT (624 aa)). Positions 158 to 167 (TYKPKLTYPP) are enriched in low complexity. The segment at 158–359 (TYKPKLTYPP…KPKTTYPPSY (202 aa)) is disordered. Over residues 168 to 184 (TYKPKPSYPPTYKPKPS) the composition is skewed to pro residues. Residues 185-262 (YPATYKSKSS…KTYPSTYKPK (78 aa)) are compositionally biased toward low complexity. Low complexity-rich tracts occupy residues 288-343 (TYKA…KAKP) and 350-359 (KPKTTYPPSY). Residues 397-636 (PTYKAKPSYP…PTYKAKPSYP (240 aa)) form a disordered region. Residues 444–486 (SYPPTYKAKPSYPPTYKAKPSYPPTYKAKPSYPPTYKTKPSYP) show a composition bias toward low complexity. Residues 659-662 (YPST) form a 56; truncated repeat. The tract at residues 660 to 751 (PSTYKAKPSY…KKKISYPSQY (92 aa)) is disordered. Over residues 662 to 677 (TYKAKPSYPPTYKAKP) the composition is skewed to low complexity. 7 repeat units span residues 663–672 (YKAKPSYPPT), 673–682 (YKAKPSYPPT), 683–692 (YKPKPSYPPT), 693–702 (YKSKSSYPSS), 703–712 (YKPKKTYPPT), 713–722 (YKPKLTYPPI), and 723–732 (YKPKPSYPPT). Positions 678–690 (SYPPTYKPKPSYP) are enriched in pro residues. Low complexity predominate over residues 691–721 (PTYKSKSSYPSSYKPKKTYPPTYKPKLTYPP).

Hydroxylated on proline (mono- or dihydroxylation) and tyrosine residues (to L-DOPA = 3',4'-dihydroxyphenylalanine) of the tandem repeats. As to expression, produced by the byssal gland.

Its subcellular location is the secreted. Functionally, provides adhesiveness to the mussel's foot. Mussels produce one of the strongest water insoluble glues. The mussel's adhesive is a bundle of threads, called a byssus, formed by a fibrous collagenous core coated with adhesive proteins. The polypeptide is Adhesive plaque matrix protein (FP1) (Mytilus galloprovincialis (Mediterranean mussel)).